A 491-amino-acid chain; its full sequence is Homeobox protein unplugged (491 aa).

Disordered regions lie at residues 1–23 (MERP…TKTT), 46–69 (SASA…QEQE), 124–146 (AGKE…PLPH), and 227–329 (FSPA…RRTA). Residues 254–264 (GDSSSDISLTL) are compositionally biased toward polar residues. Over residues 305 to 316 (GLGGKDSQGNGS) the composition is skewed to gly residues. A DNA-binding region (homeobox) is located at residues 323–382 (SRRRRTAFTSEQLLELEREFHAKKYLSLTERSQIATSLKLSEVQVKIWFQNRRAKWKRVK).

The protein resides in the nucleus. Functionally, plays a regulatory role in neural branching of the tracheae: segment-specific aspects of these neural branching patterns appear to be generated by homeotic regulation of expression. This chain is Homeobox protein unplugged, found in Drosophila pseudoobscura pseudoobscura (Fruit fly).